The chain runs to 373 residues: MPVVRVLRRVACWMLQSPACGCRAPVLPSRFLGTSPRQIPMDANFHSTSFSEADQQRVLITGGLGQLGVGLASFLRKRFGKDNVILSDIRKPPEHVFLSGPFIYSDILDYKNLREIVVNNRITWLFHYSALLSAVGEANVSLARAVNITGLHNVLDVAAEHGLRLFVPSTIGAFGPTSPRNPTPDLCIQRPRTIYGVSKVHAELMGEYYYYRYGLDFRCLRYPGIISADSQPGGGTTDYAVQIFHEAVKNGRFECNLKPDTRLPMMYIDDCLRATLEVMEAPAESLSMRTYNISAMSFTPEELAQEVLKHVPELQVTYNVDPVRQAIADSWPMNFDDSNARKDWGWKHDFDLPELVTTMLNFHGSESRVAQAN.

Residues 62–67 (GGLGQL), 88–90 (DIR), 106–107 (DI), Tyr195, Lys199, and Ile225 each bind NAD(+). Residue Tyr195 is the Proton donor/acceptor of the active site.

Belongs to the NAD(P)-dependent epimerase/dehydratase family. Homodimer.

It is found in the mitochondrion. It carries out the reaction L-threonine + NAD(+) = (2S)-2-amino-3-oxobutanoate + NADH + H(+). It participates in amino-acid degradation; L-threonine degradation via oxydo-reductase pathway; glycine from L-threonine: step 1/2. Its function is as follows. Catalyzes the NAD(+)-dependent oxidation of L-threonine to 2-amino-3-ketobutyrate, mediating L-threonine catabolism. The polypeptide is L-threonine 3-dehydrogenase, mitochondrial (Bos taurus (Bovine)).